Consider the following 623-residue polypeptide: Chaperone protein DnaK (623 aa).

A Phosphothreonine; by autocatalysis modification is found at threonine 197. Residues 595–615 (AENMYKKDEPNTANDKKKKDD) are compositionally biased toward basic and acidic residues. The interval 595 to 623 (AENMYKKDEPNTANDKKKKDDDVIDAEVE) is disordered.

The protein belongs to the heat shock protein 70 family.

In terms of biological role, acts as a chaperone. The sequence is that of Chaperone protein DnaK from Campylobacter jejuni subsp. doylei (strain ATCC BAA-1458 / RM4099 / 269.97).